The primary structure comprises 524 residues: Anthranilate synthase component 1 (524 aa).

L-tryptophan-binding positions include Ser-55 and 297 to 299; that span reads PYM. 332–333 contributes to the chorismate binding site; it reads GT. A Mg(2+)-binding site is contributed by Glu-359. Residues Tyr-447, Arg-467, 485–487, and Gly-487 contribute to the chorismate site; that span reads GAG. Position 500 (Glu-500) interacts with Mg(2+).

It belongs to the anthranilate synthase component I family. In terms of assembly, heterotetramer consisting of two non-identical subunits: a beta subunit (TrpG) and a large alpha subunit (TrpE). It depends on Mg(2+) as a cofactor.

It catalyses the reaction chorismate + L-glutamine = anthranilate + pyruvate + L-glutamate + H(+). The protein operates within amino-acid biosynthesis; L-tryptophan biosynthesis; L-tryptophan from chorismate: step 1/5. Its activity is regulated as follows. Feedback inhibited by tryptophan. Functionally, part of a heterotetrameric complex that catalyzes the two-step biosynthesis of anthranilate, an intermediate in the biosynthesis of L-tryptophan. In the first step, the glutamine-binding beta subunit (TrpG) of anthranilate synthase (AS) provides the glutamine amidotransferase activity which generates ammonia as a substrate that, along with chorismate, is used in the second step, catalyzed by the large alpha subunit of AS (TrpE) to produce anthranilate. In the absence of TrpG, TrpE can synthesize anthranilate directly from chorismate and high concentrations of ammonia. The polypeptide is Anthranilate synthase component 1 (trpE) (Haloferax volcanii (strain ATCC 29605 / DSM 3757 / JCM 8879 / NBRC 14742 / NCIMB 2012 / VKM B-1768 / DS2) (Halobacterium volcanii)).